Reading from the N-terminus, the 177-residue chain is Thymidine kinase (177 aa).

ATP is bound at residue 11–18 (GPMFSGKS). Glu83 functions as the Proton acceptor in the catalytic mechanism. Phe113 provides a ligand contact to substrate. Residues Cys138 and Cys141 each contribute to the Zn(2+) site. 157–161 (IEIIG) serves as a coordination point for substrate. Residues Cys170 and Cys173 each contribute to the Zn(2+) site.

It belongs to the thymidine kinase family. Homotetramer. Two molecules of substrate bind to each enzyme tetramer.

It carries out the reaction thymidine + ATP = dTMP + ADP + H(+). Functionally, phosphorylates thymidine and thymidine analogs, such as azidothymidine (AZT). Part of the salvage pathway for pyrimidine deoxyribonucleotide synthesis. The sequence is that of Thymidine kinase (OPG101) from Cynomys gunnisoni (Gunnison's prairie dog).